The following is a 584-amino-acid chain: Arginine--tRNA ligase (584 aa).

Positions Ala129–His139 match the 'HIGH' region motif.

It belongs to the class-I aminoacyl-tRNA synthetase family. As to quaternary structure, monomer.

The protein resides in the cytoplasm. It catalyses the reaction tRNA(Arg) + L-arginine + ATP = L-arginyl-tRNA(Arg) + AMP + diphosphate. This Halorhodospira halophila (strain DSM 244 / SL1) (Ectothiorhodospira halophila (strain DSM 244 / SL1)) protein is Arginine--tRNA ligase.